The primary structure comprises 286 residues: tRNA (guanine-N(7)-)-methyltransferase (286 aa).

Phosphoserine is present on residues Ser7 and Ser59. S-adenosyl-L-methionine-binding positions include Gly103, 126 to 127, 161 to 162, and Cys181; these read EI and NA. Asp184 is an active-site residue. Residue 259–261 coordinates S-adenosyl-L-methionine; that stretch reads TEE.

This sequence belongs to the class I-like SAM-binding methyltransferase superfamily. TrmB family. Forms a complex with TRM82.

The protein resides in the nucleus. It carries out the reaction guanosine(46) in tRNA + S-adenosyl-L-methionine = N(7)-methylguanosine(46) in tRNA + S-adenosyl-L-homocysteine. It participates in tRNA modification; N(7)-methylguanine-tRNA biosynthesis. Methyltransferase that catalyzes the formation of N(7)-methylguanine at position 46 (m7G46) in tRNA, a modification required to maintain stability of tRNAs; its absence resulting in tRNA decay. Both the D-stem and T-stem structures of tRNAs are required for efficient methyltransferase activity. The protein is tRNA (guanine-N(7)-)-methyltransferase of Saccharomyces cerevisiae (strain YJM789) (Baker's yeast).